The chain runs to 297 residues: Bifunctional protein FolD 1 (297 aa).

Residues Gly-164–Ser-166, Ser-193, and Ile-234 contribute to the NADP(+) site.

Belongs to the tetrahydrofolate dehydrogenase/cyclohydrolase family. Homodimer.

It carries out the reaction (6R)-5,10-methylene-5,6,7,8-tetrahydrofolate + NADP(+) = (6R)-5,10-methenyltetrahydrofolate + NADPH. The enzyme catalyses (6R)-5,10-methenyltetrahydrofolate + H2O = (6R)-10-formyltetrahydrofolate + H(+). The protein operates within one-carbon metabolism; tetrahydrofolate interconversion. Functionally, catalyzes the oxidation of 5,10-methylenetetrahydrofolate to 5,10-methenyltetrahydrofolate and then the hydrolysis of 5,10-methenyltetrahydrofolate to 10-formyltetrahydrofolate. In Haloarcula marismortui (strain ATCC 43049 / DSM 3752 / JCM 8966 / VKM B-1809) (Halobacterium marismortui), this protein is Bifunctional protein FolD 1.